The sequence spans 787 residues: LPS-assembly protein LptD (787 aa).

The segment at 1–78 (MAAGLPPLVV…AAGAAPAESG (78 aa)) is disordered. Residues 59-78 (LPPVGTPAEPAAGAAPAESG) are compositionally biased toward low complexity.

Belongs to the LptD family. As to quaternary structure, component of the lipopolysaccharide transport and assembly complex. Interacts with LptE and LptA.

Its function is as follows. Together with LptE, is involved in the assembly of lipopolysaccharide (LPS) at the surface of the outer membrane. This chain is LPS-assembly protein LptD, found in Aromatoleum aromaticum (strain DSM 19018 / LMG 30748 / EbN1) (Azoarcus sp. (strain EbN1)).